Reading from the N-terminus, the 940-residue chain is UvrABC system protein A (940 aa).

ATP is bound at residue 33-40 (GVSGSGKS). The segment at 252 to 279 (CPVCGFTVPELEPRLFSFNAPFGSCPDC) adopts a C4-type zinc-finger fold. 2 consecutive ABC transporter domains span residues 309–586 (WYGK…KKSL) and 606–935 (IDKK…QYLK). Residue 639–646 (GVSGSGKS) participates in ATP binding. The C4-type zinc-finger motif lies at 738–764 (CEACSGDGIIKIEMHFLPDVYVPCEVC).

It belongs to the ABC transporter superfamily. UvrA family. Forms a heterotetramer with UvrB during the search for lesions.

It localises to the cytoplasm. Its function is as follows. The UvrABC repair system catalyzes the recognition and processing of DNA lesions. UvrA is an ATPase and a DNA-binding protein. A damage recognition complex composed of 2 UvrA and 2 UvrB subunits scans DNA for abnormalities. When the presence of a lesion has been verified by UvrB, the UvrA molecules dissociate. The chain is UvrABC system protein A from Lactococcus lactis subsp. lactis (strain IL1403) (Streptococcus lactis).